The sequence spans 136 residues: Large ribosomal subunit protein uL16 (136 aa).

Belongs to the universal ribosomal protein uL16 family. In terms of assembly, part of the 50S ribosomal subunit.

In terms of biological role, binds 23S rRNA and is also seen to make contacts with the A and possibly P site tRNAs. This Shewanella pealeana (strain ATCC 700345 / ANG-SQ1) protein is Large ribosomal subunit protein uL16.